The following is a 419-amino-acid chain: Gamma-glutamyl phosphate reductase (419 aa).

Belongs to the gamma-glutamyl phosphate reductase family.

The protein localises to the cytoplasm. It carries out the reaction L-glutamate 5-semialdehyde + phosphate + NADP(+) = L-glutamyl 5-phosphate + NADPH + H(+). It functions in the pathway amino-acid biosynthesis; L-proline biosynthesis; L-glutamate 5-semialdehyde from L-glutamate: step 2/2. In terms of biological role, catalyzes the NADPH-dependent reduction of L-glutamate 5-phosphate into L-glutamate 5-semialdehyde and phosphate. The product spontaneously undergoes cyclization to form 1-pyrroline-5-carboxylate. The sequence is that of Gamma-glutamyl phosphate reductase from Yersinia pseudotuberculosis serotype O:1b (strain IP 31758).